We begin with the raw amino-acid sequence, 606 residues long: Sodium-independent sulfate anion transporter (606 aa).

Over 1–51 (MPSSVTALGQARSSGPGMAPSACCCSPAALQRRLPILAWLPSYSLQWLKMD) the chain is Extracellular. Residues 52-72 (FVAGLSVGLTAIPQALAYAEV) form a helical membrane-spanning segment. A73 is a topological domain (cytoplasmic). Residues 74–94 (GLPPQYGLYSAFMGCFVYFFL) form a helical membrane-spanning segment. Topologically, residues 95–100 (GTSRDV) are extracellular. Residues 101-117 (TLGPTAIMSLLVSFYTF) traverse the membrane as a helical segment. The Cytoplasmic segment spans residues 118-119 (HE). A helical transmembrane segment spans residues 120 to 140 (PAYAVLLAFLSGCIQLAMGVL). Topologically, residues 141–147 (RLGFLLD) are extracellular. Residues 148–168 (FISYPVIKGFTSAAAVTIGFG) form a helical membrane-spanning segment. At 169-197 (QIKNLLGLQNIPRPFFLQVYHTFLRIAET) the chain is on the cytoplasmic side. Residues 198–218 (RVGDAVLGLVCMLLLLVLKLM) traverse the membrane as a helical segment. Residues 219–250 (RDHVPPVHPEMPPGVRLSRGLVWAATTARNAL) are Extracellular-facing. The helical transmembrane segment at 251 to 271 (VVSFAALVAYSFEVTGYQPFI) threads the bilayer. Residues 272–307 (LTGETAEGLPPVRIPPFSVTTANGTISFTEMVQDMG) lie on the Cytoplasmic side of the membrane. A helical transmembrane segment spans residues 308–328 (AGLAVVPLMGLLESIAVAKAF). Residues 329–341 (ASQNNYRIDANQE) are Extracellular-facing. A helical transmembrane segment spans residues 342-362 (LLAIGLTNMLGSLVSSYPVTG). Residues 363 to 374 (SFGRTAVNAQSG) are Cytoplasmic-facing. The helical transmembrane segment at 375–395 (VCTPAGGLVTGVLVLLSLDYL) threads the bilayer. Residues 396–398 (TSL) are Extracellular-facing. The helical transmembrane segment at 399–419 (FYYIPKSALAAVIIMAVAPLF) threads the bilayer. Topologically, residues 420–441 (DTKIFRTLWRVKRLDLLPLCVT) are cytoplasmic. The helical transmembrane segment at 442–462 (FLLCFWEVQYGILAGALVSLL) threads the bilayer. Topologically, residues 463–606 (MLLHSAARPE…LDQKVALLKA (144 aa)) are extracellular. Residues 470–584 (RPETKVSEGP…EAEKHLRQEP (115 aa)) form the STAS domain.

It belongs to the SLC26A/SulP transporter (TC 2.A.53) family. Detected in all tissues tested with highest expression observed in brain, kidney, HEVEC and placenta and lowest in pancreas, skeletal muscle, liver, lung and heart.

Its subcellular location is the cell membrane. The protein localises to the lysosome membrane. The protein resides in the apical cell membrane. It localises to the basolateral cell membrane. It carries out the reaction hydrogencarbonate(in) + chloride(out) = hydrogencarbonate(out) + chloride(in). It catalyses the reaction sulfate(in) + H(+)(in) = sulfate(out) + H(+)(out). The catalysed reaction is oxalate(in) + chloride(out) = oxalate(out) + chloride(in). In terms of biological role, sodium-independent anion exchanger mediating bicarbonate, chloride, sulfate and oxalate transport. Exhibits sodium-independent sulfate anion transporter activity that may cooperate with SLC26A2 to mediate DIDS-sensitive sulfate uptake into high endothelial venules endothelial cells (HEVEC). In the kidney, mediates chloride-bicarbonate exchange, facilitating V-ATPase-mediated acid secretion. May function as a chloride channel, playing an important role in moderating chloride homeostasis and neuronal activity in the cerebellum. In Homo sapiens (Human), this protein is Sodium-independent sulfate anion transporter.